The primary structure comprises 234 residues: MSILHATILTVFPEMFPGTLGHSLAGQALNKNIWSYDVINIRDFGLTKHKNIDDEAYGGGNGLIMRPDVLGSSIDHALALNPNAEMYYPSPRGRVFTQSFAKEMLKNKNLIFLCGRYEGIDERVIEEYNVKEISVGDYILSGGEIPTLTILDCLIRLLPGVLMNQNTLSSESFEEDGEFKGGLECSLYTRPEIWRNRAVPSVLLSGNHRLINEWKKAQSHMITKLRRPELLKDL.

Residues Gly-115 and 135 to 140 (VGDYIL) each bind S-adenosyl-L-methionine.

The protein belongs to the RNA methyltransferase TrmD family. In terms of assembly, homodimer.

The protein resides in the cytoplasm. It carries out the reaction guanosine(37) in tRNA + S-adenosyl-L-methionine = N(1)-methylguanosine(37) in tRNA + S-adenosyl-L-homocysteine + H(+). Its function is as follows. Specifically methylates guanosine-37 in various tRNAs. The chain is tRNA (guanine-N(1)-)-methyltransferase from Rickettsia rickettsii (strain Iowa).